The chain runs to 236 residues: Small ribosomal subunit protein uS2c (236 aa).

The protein belongs to the universal ribosomal protein uS2 family.

The protein localises to the plastid. It localises to the chloroplast. The protein is Small ribosomal subunit protein uS2c (rps2) of Citrus sinensis (Sweet orange).